We begin with the raw amino-acid sequence, 286 residues long: MRHTLPIAPQFYVTAPQACPYLDGRRERKLFTALQGDQAETLNNSLSKQGFRRSQNVLYRPSCTDCAACLSARIRVADFAPRRGHKRISRRNEHLFRNPRSAWATEEQYALFRTYLDTRHADGGMADMDVFEFAAMIEETPVKTRVIEYRDRTDGDDLAAVCLTDILDDGLSLVYSFFAPELQKNSLGTYVILDHIALAQEAGLPYVYLGYWVPGSTKMGYKASFPALEVHVNGDWQDIGDPADYDTQTHPLSTDPIAQQVAQITLPDLRGENGRSDGLRGFSDGP.

It belongs to the R-transferase family. Bpt subfamily.

It localises to the cytoplasm. The enzyme catalyses N-terminal L-glutamyl-[protein] + L-leucyl-tRNA(Leu) = N-terminal L-leucyl-L-glutamyl-[protein] + tRNA(Leu) + H(+). It carries out the reaction N-terminal L-aspartyl-[protein] + L-leucyl-tRNA(Leu) = N-terminal L-leucyl-L-aspartyl-[protein] + tRNA(Leu) + H(+). Functions in the N-end rule pathway of protein degradation where it conjugates Leu from its aminoacyl-tRNA to the N-termini of proteins containing an N-terminal aspartate or glutamate. This chain is Aspartate/glutamate leucyltransferase, found in Jannaschia sp. (strain CCS1).